A 173-amino-acid chain; its full sequence is Macro domain-containing protein in gbd 3'region (173 aa).

The Macro domain maps to 1 to 173 (MSGEHLQVVH…NYRLYRERLS (173 aa)).

The protein belongs to the MacroD-type family.

This is Macro domain-containing protein in gbd 3'region from Cupriavidus necator (Alcaligenes eutrophus).